Consider the following 281-residue polypeptide: Undecaprenyl-diphosphatase (281 aa).

Helical transmembrane passes span A45 to I65, W86 to F106, F114 to V134, L148 to I168, F196 to V216, S224 to I244, and F256 to M276.

It belongs to the UppP family.

It localises to the cell membrane. The catalysed reaction is di-trans,octa-cis-undecaprenyl diphosphate + H2O = di-trans,octa-cis-undecaprenyl phosphate + phosphate + H(+). In terms of biological role, catalyzes the dephosphorylation of undecaprenyl diphosphate (UPP). Confers resistance to bacitracin. In Streptococcus mutans serotype c (strain ATCC 700610 / UA159), this protein is Undecaprenyl-diphosphatase.